Consider the following 255-residue polypeptide: Large ribosomal subunit protein uL4 (255 aa).

It belongs to the universal ribosomal protein uL4 family. In terms of assembly, part of the 50S ribosomal subunit.

In terms of biological role, one of the primary rRNA binding proteins, this protein initially binds near the 5'-end of the 23S rRNA. It is important during the early stages of 50S assembly. It makes multiple contacts with different domains of the 23S rRNA in the assembled 50S subunit and ribosome. Functionally, forms part of the polypeptide exit tunnel. The protein is Large ribosomal subunit protein uL4 of Thermococcus gammatolerans (strain DSM 15229 / JCM 11827 / EJ3).